A 317-amino-acid chain; its full sequence is U5 small nuclear ribonucleoprotein TSSC4 (317 aa).

Residues 1–19 show a composition bias toward acidic residues; it reads MAETEAGLEADEPTEDDTL. The disordered stretch occupies residues 1-74; that stretch reads MAETEAGLEA…PPTGTLTTAV (74 aa). The segment covering 20 to 37 has biased composition (low complexity); sequence PSDTVSLSDSDSDLSLPS. Serine 57, serine 64, serine 83, and serine 92 each carry phosphoserine. The segment at 74-101 is hom2; mediates interaction with the U5 snRNP complexes and required for spliceosomal tri-snRNP complex assembly; that stretch reads VQPFHLRGMSSTFSQRSHSIFDCLESAA. A disordered region spans residues 101–152; the sequence is ARQAPCSAPQTSVSDNGSFRRPVTPPSQTPARGLSRVHGNTGPTRVLPVPDY. A compositionally biased stretch (polar residues) spans 108 to 117; that stretch reads APQTSVSDNG. Threonine 124 carries the phosphothreonine modification. The segment at 146–300 is interaction with SNRNP200; the sequence is VLPVPDYVSH…SKKRSRDHFR (155 aa). Residues 147–183 form a hom3; mediates interaction with the U5 snRNP complexes region; sequence LPVPDYVSHPERWTKYSLEDVSEASEQSNRDAALAFL. Residues 198-238 are hom4; necessary for interaction with the PRPF19 complex and required for spliceosomal tri-snRNP complex assembly; sequence FNQDPSSCGEGRVVFTKPVRDSEARAERKRVLKKGVGSGAG. Residue lysine 214 is modified to N6-acetyllysine. Residues 216 to 317 form a disordered region; the sequence is VRDSEARAER…GPGSERGPSV (102 aa). Positions 240–250 are enriched in low complexity; the sequence is EAAVELAHLAG.

This sequence belongs to the TSSC4 family. As to quaternary structure, interacts in a RNA-independent manner with distinct U5 snRNP-containing complexes, the mono-U5 snRNP and the post-splicing U5 snRNP-PRPF19 complex. Interacts with SNRNP200; the interaction is direct, excludes recruitment of C9ORF78 and WBP4 to SNRNP200 and negatively regulates its RNA helicase activity. Interacts with PRPF8; the interaction is direct. In terms of tissue distribution, expressed in placenta. Widely expressed in embryo and newborn.

It is found in the nucleus. Its subcellular location is the cytoplasm. Protein associated with the U5 snRNP, during its maturation and its post-splicing recycling and which is required for spliceosomal tri-snRNP complex assembly in the nucleus. Has a molecular sequestering activity and transiently hinders SNRNP200 binding sites for constitutive splicing factors that intervene later during the assembly of the spliceosome and splicing. Together with its molecular sequestering activity, may also function as a molecular adapter and placeholder, coordinating the assembly of the U5 snRNP and its association with the U4/U6 di-snRNP. The protein is U5 small nuclear ribonucleoprotein TSSC4 of Mus musculus (Mouse).